A 248-amino-acid polypeptide reads, in one-letter code: Proteasome subunit alpha type-7 (248 aa).

Residue Ser-130 is glycosylated (O-linked (GlcNAc) serine). Phosphotyrosine is present on Tyr-153. At Lys-227 the chain carries N6-acetyllysine.

Belongs to the peptidase T1A family. The 26S proteasome consists of a 20S proteasome core and two 19S regulatory subunits. The 20S proteasome core is a barrel-shaped complex made of 28 subunits that are arranged in four stacked rings. The two outer rings are each formed by seven alpha subunits, and the two inner rings are formed by seven beta subunits. The proteolytic activity is exerted by three beta-subunits PSMB5, PSMB6 and PSMB7. PSMA7 interacts directly with the PSMG1-PSMG2 heterodimer which promotes 20S proteasome assembly. Interacts with HIF1A. Interacts with RAB7A. Interacts with PRKN. Interacts with ABL1 and ABL2. Interacts with EMAP2. Interacts with MAVS.

It localises to the cytoplasm. It is found in the nucleus. In terms of biological role, component of the 20S core proteasome complex involved in the proteolytic degradation of most intracellular proteins. This complex plays numerous essential roles within the cell by associating with different regulatory particles. Associated with two 19S regulatory particles, forms the 26S proteasome and thus participates in the ATP-dependent degradation of ubiquitinated proteins. The 26S proteasome plays a key role in the maintenance of protein homeostasis by removing misfolded or damaged proteins that could impair cellular functions, and by removing proteins whose functions are no longer required. Associated with the PA200 or PA28, the 20S proteasome mediates ubiquitin-independent protein degradation. This type of proteolysis is required in several pathways including spermatogenesis (20S-PA200 complex) or generation of a subset of MHC class I-presented antigenic peptides (20S-PA28 complex). Inhibits the transactivation function of HIF-1A under both normoxic and hypoxia-mimicking conditions. The interaction with EMAP2 increases the proteasome-mediated HIF-1A degradation under the hypoxic conditions. Plays a role in hepatitis C virus internal ribosome entry site-mediated translation. Mediates nuclear translocation of the androgen receptor (AR) and thereby enhances androgen-mediated transactivation. Promotes MAVS degradation and thereby negatively regulates MAVS-mediated innate immune response. In Bos taurus (Bovine), this protein is Proteasome subunit alpha type-7 (PSMA7).